Reading from the N-terminus, the 327-residue chain is Petrobactin synthase (327 aa).

The enzyme catalyses N(8)-citryl-spermidine + 3,4-dihydroxybenzoyl-[aryl-carrier protein] = N(1)-(3,4-dihydroxybenzoyl)-N(8)-citryl-spermidine + holo-[aryl-carrier protein] + H(+). It carries out the reaction N(8),N'(8)-citryl-bis(spermidine) + 3,4-dihydroxybenzoyl-[aryl-carrier protein] = N(1)-(3,4-dihydroxybenzoyl)-N(8),N'(8)-citryl-bis(spermidine) + holo-[aryl-carrier protein] + H(+). The catalysed reaction is N(1)-(3,4-dihydroxybenzoyl)-N(8),N'(8)-citryl-bis(spermidine) + 3,4-dihydroxybenzoyl-[aryl-carrier protein] = petrobactin + holo-[aryl-carrier protein] + H(+). It functions in the pathway siderophore biosynthesis; petrobactin biosynthesis. Functionally, involved in the biosynthesis of petrobactin, a catecholate siderophore that functions in both iron acquisition and virulence. Transfers the activated 3,4-dihydroxybenzoate (3,4-DHBA) moiety from 3,4-DHBA-loaded AsbD to different receipient molecules, including N-citryl-spermidine, N8,N'8-citryl-bis(spermidine) and N1-(3,4-dihydroxybenzoyl)-N8,N'8-citryl-bis(spermidine). Also catalyzes the transfer of the activated 3,4-DHBA moiety from 3,4-DHBA-loaded AsbD to spermidine to generate DHB-spermidine (DHB-SP). In Bacillus anthracis, this protein is Petrobactin synthase.